The following is a 120-amino-acid chain: Flagellar protein FliT (120 aa).

Residues Met1–Ile50 form a required for homodimerization region. The segment at Leu60 to Lys98 is fliD binding.

Belongs to the FliT family. Homodimer. Interacts with FliD and FlhC.

Its subcellular location is the cytoplasm. It is found in the cytosol. Dual-function protein that regulates the transcription of class 2 flagellar operons and that also acts as an export chaperone for the filament-capping protein FliD. As a transcriptional regulator, acts as an anti-FlhDC factor; it directly binds FlhC, thus inhibiting the binding of the FlhC/FlhD complex to class 2 promoters, resulting in decreased expression of class 2 flagellar operons. As a chaperone, effects FliD transition to the membrane by preventing its premature polymerization, and by directing it to the export apparatus. The sequence is that of Flagellar protein FliT from Yersinia enterocolitica serotype O:8 / biotype 1B (strain NCTC 13174 / 8081).